The following is a 1194-amino-acid chain: Chitin synthase C (1194 aa).

Disordered stretches follow at residues 1–91 (MSLP…PNYL) and 136–177 (GAHG…RRKA). The segment covering 12–23 (PRREETSAFREP) has biased composition (basic and acidic residues). Residues 42 to 54 (PRHHRHHRSHSSR) show a composition bias toward basic residues. Basic and acidic residues-rich tracts occupy residues 55 to 69 (HQHDIDEERAEEGGI) and 76 to 85 (VKPERGRMDP). A compositionally biased stretch (basic residues) spans 150-164 (TRHRSKKRKGSRKIS). The chain crosses the membrane as a helical span at residues 221-241 (IGLISIILMIAAFVGFLTFGF). 2 N-linked (GlcNAc...) asparagine glycosylation sites follow: Asn351 and Asn390. A helical membrane pass occupies residues 476 to 496 (YVSLIFILSIVIVKFAFALLF). Asn582, Asn608, Asn885, and Asn1014 each carry an N-linked (GlcNAc...) asparagine glycan. 3 helical membrane-spanning segments follow: residues 1039–1059 (FVIFVELVGTVVLPAAISFTI), 1073–1093 (IIPLVLLALILGLPGVLVVVT), and 1097–1117 (LVYVLWMLVYLISLPIWNFVL).

This sequence belongs to the chitin synthase family. Class V subfamily.

It is found in the cell membrane. It carries out the reaction [(1-&gt;4)-N-acetyl-beta-D-glucosaminyl](n) + UDP-N-acetyl-alpha-D-glucosamine = [(1-&gt;4)-N-acetyl-beta-D-glucosaminyl](n+1) + UDP + H(+). Polymerizes chitin, a structural polymer of the cell wall and septum, by transferring the sugar moiety of UDP-GlcNAc to the non-reducing end of the growing chitin polymer. Responsible for synthesis of 30-40% of the chitin in the cells. ChsA and chsD play redundant functions in conidia formation. The chitin synthesized by the chsD-encoded isozyme contributes to the rigidity of the walls of germinating conidia, of the subapical region of hyphae, and of conidiophore vesicles, but is not necessary for normal morphology of these cells. This chain is Chitin synthase C, found in Emericella nidulans (strain FGSC A4 / ATCC 38163 / CBS 112.46 / NRRL 194 / M139) (Aspergillus nidulans).